The following is a 120-amino-acid chain: Large ribosomal subunit protein uL18 (120 aa).

The protein belongs to the universal ribosomal protein uL18 family. In terms of assembly, part of the 50S ribosomal subunit; part of the 5S rRNA/L5/L18/L25 subcomplex. Contacts the 5S and 23S rRNAs.

This is one of the proteins that bind and probably mediate the attachment of the 5S RNA into the large ribosomal subunit, where it forms part of the central protuberance. The polypeptide is Large ribosomal subunit protein uL18 (Janthinobacterium sp. (strain Marseille) (Minibacterium massiliensis)).